A 674-amino-acid polypeptide reads, in one-letter code: DNA ligase (674 aa).

NAD(+) contacts are provided by residues Asp-34–Asp-38, Ser-83–Leu-84, and Glu-117. Lys-119 acts as the N6-AMP-lysine intermediate in catalysis. Arg-140, Glu-184, Lys-297, and Lys-321 together coordinate NAD(+). Positions 415, 418, 433, and 439 each coordinate Zn(2+). The region spanning Leu-598–Leu-674 is the BRCT domain.

The protein belongs to the NAD-dependent DNA ligase family. LigA subfamily. Mg(2+) is required as a cofactor. Requires Mn(2+) as cofactor.

It catalyses the reaction NAD(+) + (deoxyribonucleotide)n-3'-hydroxyl + 5'-phospho-(deoxyribonucleotide)m = (deoxyribonucleotide)n+m + AMP + beta-nicotinamide D-nucleotide.. Its function is as follows. DNA ligase that catalyzes the formation of phosphodiester linkages between 5'-phosphoryl and 3'-hydroxyl groups in double-stranded DNA using NAD as a coenzyme and as the energy source for the reaction. It is essential for DNA replication and repair of damaged DNA. The sequence is that of DNA ligase from Chlorobaculum tepidum (strain ATCC 49652 / DSM 12025 / NBRC 103806 / TLS) (Chlorobium tepidum).